The following is a 165-amino-acid chain: Lipoprotein signal peptidase (165 aa).

The next 3 helical transmembrane spans lie at 12–32 (WLWVVVAVLIIDLGSKFLILQ), 70–90 (WFFAGIAVGICVVLAVLMYRS), and 102–122 (ALIIGGALGNLFDRLWHGFVV). Catalysis depends on residues D123 and D141. The helical transmembrane segment at 137–157 (FNLADSAICIGAALIVLEGFL) threads the bilayer.

This sequence belongs to the peptidase A8 family.

It is found in the cell inner membrane. It carries out the reaction Release of signal peptides from bacterial membrane prolipoproteins. Hydrolyzes -Xaa-Yaa-Zaa-|-(S,diacylglyceryl)Cys-, in which Xaa is hydrophobic (preferably Leu), and Yaa (Ala or Ser) and Zaa (Gly or Ala) have small, neutral side chains.. The protein operates within protein modification; lipoprotein biosynthesis (signal peptide cleavage). Functionally, this protein specifically catalyzes the removal of signal peptides from prolipoproteins. The chain is Lipoprotein signal peptidase from Klebsiella aerogenes (strain ATCC 13048 / DSM 30053 / CCUG 1429 / JCM 1235 / KCTC 2190 / NBRC 13534 / NCIMB 10102 / NCTC 10006 / CDC 819-56) (Enterobacter aerogenes).